Reading from the N-terminus, the 1008-residue chain is Collagen alpha-1(I) chain (1008 aa).

The segment at 1-1008 is disordered; it reads GGISVPGPMG…PGPPGPPGPP (1008 aa). Residues Pro-18, Pro-21, Pro-23, Pro-32, Pro-35, Pro-38, Pro-52, Pro-67, Pro-73, Pro-82, and Pro-88 each carry the 4-hydroxyproline modification. A compositionally biased stretch (basic and acidic residues) spans 55-69; it reads NGDDGEAGKPGRPGE. A 5-hydroxylysine; alternate modification is found at Lys-91. Residue Lys-91 is glycosylated (O-linked (Gal...) hydroxylysine; alternate). At Ser-97 the chain carries Phosphoserine. The span at 105-121 shows a compositional bias: low complexity; it reads DAGPAGPKGEPGSPGEN. Pro-115, Pro-118, Pro-124, Pro-133, Pro-139, Pro-160, Pro-169, Pro-172, Pro-199, Pro-202, Pro-214, Pro-220, Pro-229, Pro-235, and Pro-238 each carry 4-hydroxyproline. Positions 139–157 are enriched in low complexity; the sequence is PGASGPAGARGNDGAAGAA. The segment covering 159-171 has biased composition (pro residues); sequence PPGPTGPAGPPGF. A compositionally biased stretch (low complexity) spans 205–235; it reads AGAAGPAGNPGADGQPGAKGANGAPGIAGAP. The span at 236 to 255 shows a compositional bias: gly residues; that stretch reads GFPGRGPSGPQGPSGPGPKG. Lys-254 is subject to 5-hydroxylysine. Residues Pro-260, Pro-263, Pro-275, Pro-284, Pro-299, Pro-305, Pro-314, and Pro-320 each carry the 4-hydroxyproline modification. Residues 309 to 318 show a composition bias toward gly residues; that stretch reads GERGGPGSRG. Lys-329 is subject to 5-hydroxylysine. A 4-hydroxyproline mark is found at Pro-338, Pro-347, Pro-353, Pro-359, Pro-368, Pro-371, Pro-380, Pro-389, Pro-395, Pro-407, Pro-416, Pro-425, Pro-428, Pro-446, Pro-463, Pro-469, Pro-475, Pro-481, Pro-487, Pro-493, Pro-505, Pro-514, Pro-523, Pro-535, Pro-538, Pro-544, Pro-550, and Pro-559. The span at 362 to 388 shows a compositional bias: low complexity; sequence KGLTGSPGSPGPDGKTGPPGPAGQDGR. Residues 397-416 show a composition bias toward low complexity; sequence ARGQAGVMGFPGPKGAAGEP. Over residues 475–484 the composition is skewed to low complexity; the sequence is PGEAGKPGEQ. The span at 519–547 shows a compositional bias: low complexity; sequence PRGAPGNDGAKGDAGAPGAPGSQGAPGLQ. Position 571 is a 5-hydroxylysine (Lys-571). Pro-577, Pro-592, and Pro-598 each carry 4-hydroxyproline. Over residues 604 to 618 the composition is skewed to low complexity; the sequence is SGPSGPAGPTGARGA. Ser-607 is subject to Phosphoserine. A 4-hydroxyproline mark is found at Pro-619, Pro-625, Pro-628, Pro-637, Pro-643, Pro-661, Pro-670, and Pro-679. The span at 631-658 shows a compositional bias: low complexity; that stretch reads AGFAGPPGADGQPGAKGEPGDAGAKGDA. Pro residues predominate over residues 660–672; it reads PPGPAGPTGPPGP. Lys-682 is subject to 5-hydroxylysine. The segment covering 687–703 has biased composition (low complexity); that stretch reads SAGPPGATGFPGAAGRV. A 4-hydroxyproline mark is found at Pro-691 and Pro-697. Residue Pro-705 is modified to 3-hydroxyproline. A 4-hydroxyproline mark is found at Pro-706, Pro-717, Pro-738, Pro-747, Pro-755, Pro-764, Pro-781, Pro-790, Pro-793, Pro-799, Pro-814, Pro-820, Pro-826, Pro-835, and Pro-841. A compositionally biased stretch (low complexity) spans 731-740; sequence ETGPAGRPGE. Low complexity predominate over residues 752 to 764; that stretch reads KGSPGADGPAGAP. Residues 813 to 823 are compositionally biased toward pro residues; it reads PPGPVGPPGLA. Residues 825 to 840 are compositionally biased toward low complexity; the sequence is PPGESGREGSPGAEGS. Lys-850 carries the post-translational modification 5-hydroxylysine. The segment covering 858–873 has biased composition (pro residues); that stretch reads PGPPGAPGAPGAPGPV. Residues Pro-861, Pro-864, and Pro-867 each carry the 4-hydroxyproline modification. A compositionally biased stretch (low complexity) spans 894-908; it reads AGPAGARGPAGPQGP. Residues 909–923 show a composition bias toward basic and acidic residues; that stretch reads RGDKGETGEQGDRGI. Lys-912 carries the post-translational modification 5-hydroxylysine. Lys-924 is modified (5-hydroxylysine; alternate). The O-linked (Gal...) hydroxylysine; alternate glycan is linked to Lys-924. A 4-hydroxyproline mark is found at Pro-939, Pro-942, Pro-960, and Pro-975. Residues 942–975 show a composition bias toward low complexity; the sequence is PGEQGPSGASGPAGPRGPPGSAGSPGKDGLNGLP. A 3-hydroxyproline modification is found at Pro-980. Pro-981 carries the 4-hydroxyproline modification. Residues 993–1008 show a composition bias toward pro residues; that stretch reads VGPPGPPGPPGPPGPP. 3-hydroxyproline is present on Pro-995. Pro-996 is subject to 4-hydroxyproline. Pro-998 is modified (3-hydroxyproline). Pro-999 carries the 4-hydroxyproline modification. Pro-1001 is modified (3-hydroxyproline). Residues Pro-1002, Pro-1005, and Pro-1008 each carry the 4-hydroxyproline modification.

This sequence belongs to the fibrillar collagen family. In terms of assembly, trimers of one alpha 2(I) and two alpha 1(I) chains. Contains mostly 4-hydroxyproline. Proline residues at the third position of the tripeptide repeating unit (G-X-Y) are hydroxylated in some or all of the chains. Post-translationally, contains 3-hydroxyproline at a few sites. This modification occurs on the first proline residue in the sequence motif Gly-Pro-Hyp, where Hyp is 4-hydroxyproline. In terms of processing, lysine residues at the third position of the tripeptide repeating unit (G-X-Y) are 5-hydroxylated in some or all of the chains. O-glycosylated on hydroxylated lysine residues. The O-linked glycan consists of a Glc-Gal disaccharide. As to expression, expressed in bones.

It localises to the secreted. The protein localises to the extracellular space. It is found in the extracellular matrix. In terms of biological role, type I collagen is a member of group I collagen (fibrillar forming collagen). This chain is Collagen alpha-1(I) chain, found in Paramylodon harlani (Harlan's ground sloth).